A 285-amino-acid chain; its full sequence is Probable enoyl-CoA hydratase echA12 (285 aa).

Belongs to the enoyl-CoA hydratase/isomerase family.

The enzyme catalyses a (3S)-3-hydroxyacyl-CoA = a (2E)-enoyl-CoA + H2O. The catalysed reaction is a 4-saturated-(3S)-3-hydroxyacyl-CoA = a (3E)-enoyl-CoA + H2O. Its function is as follows. Could possibly oxidize fatty acids using specific components. The protein is Probable enoyl-CoA hydratase echA12 (echA12) of Mycobacterium tuberculosis (strain CDC 1551 / Oshkosh).